Here is a 226-residue protein sequence, read N- to C-terminus: Leucyl/phenylalanyl-tRNA--protein transferase (226 aa).

Belongs to the L/F-transferase family.

It localises to the cytoplasm. The catalysed reaction is N-terminal L-lysyl-[protein] + L-leucyl-tRNA(Leu) = N-terminal L-leucyl-L-lysyl-[protein] + tRNA(Leu) + H(+). It catalyses the reaction N-terminal L-arginyl-[protein] + L-leucyl-tRNA(Leu) = N-terminal L-leucyl-L-arginyl-[protein] + tRNA(Leu) + H(+). The enzyme catalyses L-phenylalanyl-tRNA(Phe) + an N-terminal L-alpha-aminoacyl-[protein] = an N-terminal L-phenylalanyl-L-alpha-aminoacyl-[protein] + tRNA(Phe). Functionally, functions in the N-end rule pathway of protein degradation where it conjugates Leu, Phe and, less efficiently, Met from aminoacyl-tRNAs to the N-termini of proteins containing an N-terminal arginine or lysine. In Pseudomonas putida (strain ATCC 47054 / DSM 6125 / CFBP 8728 / NCIMB 11950 / KT2440), this protein is Leucyl/phenylalanyl-tRNA--protein transferase.